A 623-amino-acid chain; its full sequence is Chaperone protein HtpG (623 aa).

The a; substrate-binding stretch occupies residues 1–336 (MSMKGQETRG…SNDLPLNVSR (336 aa)). Positions 337–551 (EILQDSRVTQ…ADEMSTQMAK (215 aa)) are b. A c region spans residues 552-623 (LFAAAGQEAP…IRRMNKLLSA (72 aa)).

This sequence belongs to the heat shock protein 90 family. Homodimer.

It localises to the cytoplasm. Functionally, molecular chaperone. Has ATPase activity. In Serratia proteamaculans (strain 568), this protein is Chaperone protein HtpG.